The chain runs to 492 residues: ATP synthase subunit beta, chloroplastic (492 aa).

170-177 (GGAGVGKT) serves as a coordination point for ATP.

It belongs to the ATPase alpha/beta chains family. In terms of assembly, F-type ATPases have 2 components, CF(1) - the catalytic core - and CF(0) - the membrane proton channel. CF(1) has five subunits: alpha(3), beta(3), gamma(1), delta(1), epsilon(1). CF(0) has four main subunits: a(1), b(1), b'(1) and c(9-12).

The protein resides in the plastid. It is found in the chloroplast thylakoid membrane. The catalysed reaction is ATP + H2O + 4 H(+)(in) = ADP + phosphate + 5 H(+)(out). In terms of biological role, produces ATP from ADP in the presence of a proton gradient across the membrane. The catalytic sites are hosted primarily by the beta subunits. This chain is ATP synthase subunit beta, chloroplastic, found in Psilotum nudum (Whisk fern).